A 378-amino-acid polypeptide reads, in one-letter code: Odorant receptor Or2 (378 aa).

A topological domain (cytoplasmic) is located at residue Met1. Residues 2–22 form a helical membrane-spanning segment; the sequence is LIEECPIIGVNVRVWLFWSYL. Topologically, residues 23 to 29 are extracellular; the sequence is RRPRLSR. Residues 30-50 form a helical membrane-spanning segment; sequence FLVGCIPVAVLNVFQFLKLYS. Over 51-59 the chain is Cytoplasmic; that stretch reads SWGDMSELI. A helical transmembrane segment spans residues 60–80; the sequence is INGYFTVLYFNLVLRTSFLVI. Over 81–120 the chain is Extracellular; sequence NRRKFETFFEGVAAEYALLEKNDDIRPVLERYTRRGRMLS. A helical membrane pass occupies residues 121 to 141; the sequence is ISNLWLGAFISACFVTYPLFV. At 142–164 the chain is on the cytoplasmic side; the sequence is PGRGLPYGVTIPGVDVLATPTYQ. Residues 165 to 185 traverse the membrane as a helical segment; that stretch reads VVFVLQVYLTFPACCMYIPFT. Residues 186–254 lie on the Extracellular side of the membrane; it reads SFYATCTLFA…HDLNSLVTHL (69 aa). A helical transmembrane segment spans residues 255 to 275; it reads CLLEFLSFGMMLCALLFLLSI. At 276-278 the chain is on the cytoplasmic side; sequence SNQ. A helical membrane pass occupies residues 279–299; it reads LAQMIMIGSYIFMILSQMFAF. Topologically, residues 300–378 are extracellular; it reads YWHANEVLEQ…YFTLLRRVYN (79 aa). Asn364 is a glycosylation site (N-linked (GlcNAc...) asparagine).

This sequence belongs to the insect chemoreceptor superfamily. Heteromeric odorant receptor channel (TC 1.A.69) family. Or30a subfamily. In terms of tissue distribution, expressed in male and female antennae and maxillary palps.

It localises to the cell membrane. In terms of biological role, odorant receptor which plays a critical role in the anthropophilic host-seeking behavior; establishes the host preference to transmit malaria. This Anopheles gambiae (African malaria mosquito) protein is Odorant receptor Or2 (OR2).